Reading from the N-terminus, the 383-residue chain is 3-dehydroquinate synthase (383 aa).

Residues 81 to 86 (EGEVSK), 115 to 119 (GVVGD), 139 to 140 (TS), Lys152, and Lys161 each bind NAD(+). Zn(2+) is bound by residues Glu194, His256, and His274.

The protein belongs to the sugar phosphate cyclases superfamily. Dehydroquinate synthase family. Co(2+) is required as a cofactor. The cofactor is Zn(2+). It depends on NAD(+) as a cofactor.

The protein localises to the cytoplasm. It catalyses the reaction 7-phospho-2-dehydro-3-deoxy-D-arabino-heptonate = 3-dehydroquinate + phosphate. Its pathway is metabolic intermediate biosynthesis; chorismate biosynthesis; chorismate from D-erythrose 4-phosphate and phosphoenolpyruvate: step 2/7. Its function is as follows. Catalyzes the conversion of 3-deoxy-D-arabino-heptulosonate 7-phosphate (DAHP) to dehydroquinate (DHQ). This is 3-dehydroquinate synthase from Nitrobacter winogradskyi (strain ATCC 25391 / DSM 10237 / CIP 104748 / NCIMB 11846 / Nb-255).